Reading from the N-terminus, the 341-residue chain is Methionine import ATP-binding protein MetN 3 (341 aa).

The ABC transporter domain occupies 2–241 (ILLENVKKIY…PQQDITKRFV (240 aa)). 38-45 (GYSGAGKS) contacts ATP.

The protein belongs to the ABC transporter superfamily. Methionine importer (TC 3.A.1.24) family. In terms of assembly, the complex is composed of two ATP-binding proteins (MetN), two transmembrane proteins (MetI) and a solute-binding protein (MetQ).

The protein resides in the cell membrane. It carries out the reaction L-methionine(out) + ATP + H2O = L-methionine(in) + ADP + phosphate + H(+). The catalysed reaction is D-methionine(out) + ATP + H2O = D-methionine(in) + ADP + phosphate + H(+). Its function is as follows. Part of the ABC transporter complex MetNIQ involved in methionine import. Responsible for energy coupling to the transport system. This chain is Methionine import ATP-binding protein MetN 3, found in Bacillus anthracis.